The following is a 307-amino-acid chain: MSHISVLLFETVESLLADRTTGVYIDATFGRGGHTHLLLSKLDENARVYAFDKDPQALEVAAALAQEDPRFTIIHASFADIKEKMQEIGVQSVDGIMADLGVSSPQLDQAERGFSFMQDGPLDMRMDNSKGLTAAEWLLEVEEEDLANIIYQYGEERHSRRIARAIKQAGKLDTTAQLAEIVKTAHPKWEKHKHPATRTFQAIRIAINKELDDIEVFLPQAVDLLKPKGRLSVISFHSLEDRLIKQFIQKESTLTEDSGWGMPQQQVDTRRLKKISRVRVSEEEVKANPRSRSAWLRVAERLEQKGA.

Residues 32–34 (GGH), Asp-52, Phe-78, Asp-99, and Gln-106 each bind S-adenosyl-L-methionine.

This sequence belongs to the methyltransferase superfamily. RsmH family.

The protein localises to the cytoplasm. It catalyses the reaction cytidine(1402) in 16S rRNA + S-adenosyl-L-methionine = N(4)-methylcytidine(1402) in 16S rRNA + S-adenosyl-L-homocysteine + H(+). Functionally, specifically methylates the N4 position of cytidine in position 1402 (C1402) of 16S rRNA. This Acinetobacter baumannii (strain SDF) protein is Ribosomal RNA small subunit methyltransferase H.